Here is a 520-residue protein sequence, read N- to C-terminus: Aldehyde dehydrogenase 5, mitochondrial (520 aa).

The transit peptide at 1–23 directs the protein to the mitochondrion; that stretch reads MLSRTRAAAPNSRIFTRSLLRLY. 266 to 271 contributes to the NAD(+) binding site; it reads GSTATG. The active-site Proton acceptor is glutamate 288. The Nucleophile role is filled by cysteine 322.

This sequence belongs to the aldehyde dehydrogenase family.

The protein localises to the mitochondrion matrix. It catalyses the reaction an aldehyde + NADP(+) + H2O = a carboxylate + NADPH + 2 H(+). The catalysed reaction is an aldehyde + NAD(+) + H2O = a carboxylate + NADH + 2 H(+). The protein operates within alcohol metabolism; ethanol degradation; acetate from ethanol: step 2/2. Induced by potassium ions. Its function is as follows. Minor mitochondrial aldehyde dehydrogenase isoform. Plays a role in regulation or biosynthesis of electron transport chain components. Involved in the biosynthesis of acetate during anaerobic growth on glucose. The chain is Aldehyde dehydrogenase 5, mitochondrial (ALD5) from Saccharomyces cerevisiae (strain YJM789) (Baker's yeast).